The following is a 199-amino-acid chain: Recombination protein RecR (199 aa).

The C4-type zinc finger occupies cysteine 56–cysteine 71. A Toprim domain is found at glutamate 79–proline 174.

Belongs to the RecR family.

In terms of biological role, may play a role in DNA repair. It seems to be involved in an RecBC-independent recombinational process of DNA repair. It may act with RecF and RecO. The protein is Recombination protein RecR of Dechloromonas aromatica (strain RCB).